The sequence spans 702 residues: Polyribonucleotide nucleotidyltransferase (702 aa).

Positions 487 and 493 each coordinate Mg(2+). Positions 554–613 (PRLLTIKIHPDKIREVIGKGGSTIQAITKETGTQIDIQDDGTIVIASVNAIAAQAAKARI) constitute a KH domain. Residues 623-691 (GRIYEGKVAK…KQGRIRLSMK (69 aa)) form the S1 motif domain.

Belongs to the polyribonucleotide nucleotidyltransferase family. In terms of assembly, component of the RNA degradosome, which is a multiprotein complex involved in RNA processing and mRNA degradation. Mg(2+) is required as a cofactor.

The protein localises to the cytoplasm. It carries out the reaction RNA(n+1) + phosphate = RNA(n) + a ribonucleoside 5'-diphosphate. Its function is as follows. Involved in mRNA degradation. Catalyzes the phosphorolysis of single-stranded polyribonucleotides processively in the 3'- to 5'-direction. The protein is Polyribonucleotide nucleotidyltransferase of Stenotrophomonas maltophilia (strain R551-3).